The primary structure comprises 149 residues: Globin (149 aa).

Residues 2–149 (VLTKDEFDSL…KIFTGVAGQL (148 aa)) form the Globin domain. H100 serves as a coordination point for heme.

Belongs to the globin family. Monomer.

In terms of biological role, oxygen binding protein. This chain is Globin, found in Isoparorchis hypselobagri (Giant trematode).